A 318-amino-acid chain; its full sequence is GTP cyclohydrolase MptA (318 aa).

Belongs to the GTP cyclohydrolase IV family. In terms of assembly, homodimer. The cofactor is Fe(2+).

The catalysed reaction is GTP + H2O = 7,8-dihydroneopterin 2',3'-cyclic phosphate + formate + diphosphate + H(+). It functions in the pathway cofactor biosynthesis; 5,6,7,8-tetrahydromethanopterin biosynthesis. In terms of biological role, converts GTP to 7,8-dihydro-D-neopterin 2',3'-cyclic phosphate, the first intermediate in the biosynthesis of coenzyme methanopterin. This is GTP cyclohydrolase MptA from Methanothermobacter thermautotrophicus (strain ATCC 29096 / DSM 1053 / JCM 10044 / NBRC 100330 / Delta H) (Methanobacterium thermoautotrophicum).